Here is a 355-residue protein sequence, read N- to C-terminus: 1D-myo-inositol 2-acetamido-2-deoxy-alpha-D-glucopyranoside deacetylase 3 (355 aa).

Zn(2+)-binding residues include His-31, Asp-34, and His-169.

It belongs to the MshB deacetylase family. Requires Zn(2+) as cofactor.

It catalyses the reaction 1D-myo-inositol 2-acetamido-2-deoxy-alpha-D-glucopyranoside + H2O = 1D-myo-inositol 2-amino-2-deoxy-alpha-D-glucopyranoside + acetate. Functionally, catalyzes the deacetylation of 1D-myo-inositol 2-acetamido-2-deoxy-alpha-D-glucopyranoside (GlcNAc-Ins) in the mycothiol biosynthesis pathway. In Catenulispora acidiphila (strain DSM 44928 / JCM 14897 / NBRC 102108 / NRRL B-24433 / ID139908), this protein is 1D-myo-inositol 2-acetamido-2-deoxy-alpha-D-glucopyranoside deacetylase 3.